The primary structure comprises 338 residues: Nuclear hormone receptor family member nhr-52 (338 aa).

Residues M1–Q75 constitute a DNA-binding region (nuclear receptor). 2 consecutive NR C4-type zinc fingers follow at residues C3 to C23 and C39 to C63. Positions K98–R337 constitute an NR LBD domain.

The protein belongs to the nuclear hormone receptor family.

Its subcellular location is the nucleus. In terms of biological role, orphan nuclear receptor. This Caenorhabditis elegans protein is Nuclear hormone receptor family member nhr-52 (nhr-52).